Consider the following 98-residue polypeptide: NADH-ubiquinone oxidoreductase chain 4L (98 aa).

The next 3 helical transmembrane spans lie at methionine 1 to isoleucine 21, serine 29 to leucine 49, and isoleucine 61 to valine 81.

The protein belongs to the complex I subunit 4L family. As to quaternary structure, core subunit of respiratory chain NADH dehydrogenase (Complex I) which is composed of 45 different subunits.

It localises to the mitochondrion inner membrane. The catalysed reaction is a ubiquinone + NADH + 5 H(+)(in) = a ubiquinol + NAD(+) + 4 H(+)(out). In terms of biological role, core subunit of the mitochondrial membrane respiratory chain NADH dehydrogenase (Complex I) which catalyzes electron transfer from NADH through the respiratory chain, using ubiquinone as an electron acceptor. Part of the enzyme membrane arm which is embedded in the lipid bilayer and involved in proton translocation. The sequence is that of NADH-ubiquinone oxidoreductase chain 4L (MT-ND4L) from Lepus europaeus (European hare).